The following is a 449-amino-acid chain: Kynurenine 3-monooxygenase (449 aa).

This sequence belongs to the aromatic-ring hydroxylase family. KMO subfamily. Requires FAD as cofactor.

The catalysed reaction is L-kynurenine + NADPH + O2 + H(+) = 3-hydroxy-L-kynurenine + NADP(+) + H2O. It functions in the pathway cofactor biosynthesis; NAD(+) biosynthesis; quinolinate from L-kynurenine: step 1/3. Its function is as follows. Catalyzes the hydroxylation of L-kynurenine (L-Kyn) to form 3-hydroxy-L-kynurenine (L-3OHKyn). Required for synthesis of quinolinic acid. The sequence is that of Kynurenine 3-monooxygenase from Legionella pneumophila (strain Corby).